Reading from the N-terminus, the 117-residue chain is Small ribosomal subunit protein bS6 (117 aa).

The segment at 92 to 117 is disordered; it reads KVDEHPEGPSIQMQKREERDNRRERR. The span at 105 to 117 shows a compositional bias: basic and acidic residues; sequence QKREERDNRRERR.

This sequence belongs to the bacterial ribosomal protein bS6 family.

Functionally, binds together with bS18 to 16S ribosomal RNA. The polypeptide is Small ribosomal subunit protein bS6 (Dinoroseobacter shibae (strain DSM 16493 / NCIMB 14021 / DFL 12)).